Reading from the N-terminus, the 347-residue chain is MSAPARVLVVDDSATMRGLITAVLSSDPEVNVIGQAGDALEAREAIKRLNPDVLTLDIEMPNMNGLDFLEKIMTLRPMPVIMVSTMTHRGAEATLAALEIGAFDCVGKPAPGELRPFGDLAEKVKAAARTQRQYSQPVVAVAPPPSVADFRVGRKIVAIGSSTGGVEALIAVLQKFPANCPPTVITQHMPPTFTKSFAERLNRLCAPVVQEATDGARLEIGKIYLAPGGERHLQVSGASAPCCRLIDRAPVNGHRPSVDVLFDSVAELAGRNAVGVILTGMGRDGAAGLLKMRHAGARTLGQNEKTCVVYGMPRVAHELGAVEQQLPLSAIGEEILKMTAARKEGTE.

One can recognise a Response regulatory domain in the interval 6–123 (RVLVVDDSAT…LRPFGDLAEK (118 aa)). 4-aspartylphosphate is present on D57. The region spanning 150–342 (FRVGRKIVAI…EEILKMTAAR (193 aa)) is the CheB-type methylesterase domain. Catalysis depends on residues S162, H188, and D284.

The protein belongs to the CheB family. Post-translationally, phosphorylated by CheA. Phosphorylation of the N-terminal regulatory domain activates the methylesterase activity.

Its subcellular location is the cytoplasm. It carries out the reaction [protein]-L-glutamate 5-O-methyl ester + H2O = L-glutamyl-[protein] + methanol + H(+). The catalysed reaction is L-glutaminyl-[protein] + H2O = L-glutamyl-[protein] + NH4(+). In terms of biological role, involved in chemotaxis. Part of a chemotaxis signal transduction system that modulates chemotaxis in response to various stimuli. Catalyzes the demethylation of specific methylglutamate residues introduced into the chemoreceptors (methyl-accepting chemotaxis proteins or MCP) by CheR. Also mediates the irreversible deamidation of specific glutamine residues to glutamic acid. This Rhizobium johnstonii (strain DSM 114642 / LMG 32736 / 3841) (Rhizobium leguminosarum bv. viciae) protein is Protein-glutamate methylesterase/protein-glutamine glutaminase 1.